Consider the following 1142-residue polypeptide: SNF1-activating kinase 1 (1142 aa).

The segment at 22–41 is disordered; sequence ELEKSGTSSSVSLRSPTKSS. Thr43 is modified (phosphothreonine). Polar residues predominate over residues 82–93; the sequence is QHQQHISSSLAK. The tract at residues 82-107 is disordered; it reads QHQQHISSSLAKTPTTTSSFCSSGSS. The segment covering 94-107 has biased composition (low complexity); it reads TPTTTSSFCSSGSS. The Protein kinase domain maps to 133–448; sequence YEIIKELGHG…IPAIKKHPFV (316 aa). ATP is bound by residues 139–147 and Lys162; that span reads LGHGQHGKV. Catalysis depends on Asp277, which acts as the Proton acceptor. Disordered stretches follow at residues 634–678, 694–799, 825–875, 919–971, 1005–1027, and 1066–1142; these read SPEA…VLPQ, NSLL…NSPI, SHFN…AYSE, KSSL…QKGS, SQPI…KATT, and STNA…SALP. The span at 640 to 656 shows a compositional bias: polar residues; it reads SVSSVPNLPSAPSSTRL. A compositionally biased stretch (low complexity) spans 694-706; that stretch reads NSLLRNSSSHLTS. Residues 707–741 show a composition bias toward polar residues; it reads YNSGRPSSRTGRMNSRNQNLPKIPNSLSKISTTKL. Basic and acidic residues predominate over residues 742-751; that stretch reads TELRVPKDSE. Residues 785 to 799 show a composition bias toward polar residues; the sequence is NINSSDKSGSKNSPI. Low complexity-rich tracts occupy residues 835–868 and 920–936; these read SSQS…RNSS and SSLN…SSSS. The segment covering 958-971 has biased composition (polar residues); that stretch reads SKLSELSNSPQKGS. Ser964 is modified (phosphoserine). The segment covering 1096–1111 has biased composition (basic and acidic residues); sequence NDEHARNTSCHGDKGQ. The residue at position 1126 (Ser1126) is a Phosphoserine. Residues 1133–1142 are compositionally biased toward basic and acidic residues; the sequence is NEEKRRSALP.

It belongs to the protein kinase superfamily. Ser/Thr protein kinase family. Associates with the SNF1 kinase complex. Interacts with SNF1 and REG1. Post-translationally, autophosphorylated.

The protein localises to the cytoplasm. The catalysed reaction is L-seryl-[protein] + ATP = O-phospho-L-seryl-[protein] + ADP + H(+). It carries out the reaction L-threonyl-[protein] + ATP = O-phospho-L-threonyl-[protein] + ADP + H(+). Its function is as follows. Serine/threonine-protein kinase that phosphorylates SNF1, the catalytic subunit of the SNF1 kinase complex. Acts as an activator of the SNF1 kinase complex and controls its nuclear localization upon glucose and nitrogen depletion. Also required for SNF1 kinase activation under other stress conditions like alkaline pH or presence of cadmium. This is SNF1-activating kinase 1 (SAK1) from Saccharomyces cerevisiae (strain ATCC 204508 / S288c) (Baker's yeast).